The following is a 233-amino-acid chain: Probable chemoreceptor glutamine deamidase CheD (233 aa).

It belongs to the CheD family.

The catalysed reaction is L-glutaminyl-[protein] + H2O = L-glutamyl-[protein] + NH4(+). Its function is as follows. Probably deamidates glutamine residues to glutamate on methyl-accepting chemotaxis receptors (MCPs), playing an important role in chemotaxis. The sequence is that of Probable chemoreceptor glutamine deamidase CheD from Vibrio cholerae serotype O1 (strain ATCC 39315 / El Tor Inaba N16961).